Consider the following 85-residue polypeptide: UPF0410 protein YdaS (85 aa).

The next 3 helical transmembrane spans lie at 2–22, 28–48, and 58–78; these read LSFL…SAIV, GGIF…HGLL, and FAIF…GLIF.

Belongs to the UPF0410 family.

It localises to the cell membrane. This chain is UPF0410 protein YdaS (ydaS), found in Bacillus subtilis (strain 168).